The following is a 526-amino-acid chain: Amine oxidase [flavin-containing] A (526 aa).

Met1 is subject to N-acetylmethionine. The Cytoplasmic segment spans residues 1 to 497 (MTDLEKPNLA…HTFLERNLPS (497 aa)). Ser383 is subject to Phosphoserine. Cys406 carries the S-8alpha-FAD cysteine modification. The helical; Anchor for type IV membrane protein transmembrane segment at 498-518 (VPGLLKITGVSTSVALLCFVL) threads the bilayer. At 519–526 (YKIKKLPC) the chain is on the mitochondrial intermembrane side. Residues 520–522 (KIK) form an interaction with membrane phospholipid headgroups region.

It belongs to the flavin monoamine oxidase family. Monomer, homo- or heterodimer (containing two subunits of similar size). Each subunit contains a covalently bound flavin. Enzymatically active as monomer. The cofactor is FAD.

The protein resides in the mitochondrion outer membrane. It carries out the reaction a secondary aliphatic amine + O2 + H2O = a primary amine + an aldehyde + H2O2. The catalysed reaction is a primary methyl amine + O2 + H2O = an aldehyde + H2O2 + NH4(+). It catalyses the reaction (R)-adrenaline + O2 + H2O = (R)-3,4-dihydroxymandelaldehyde + methylamine + H2O2. The enzyme catalyses dopamine + O2 + H2O = 3,4-dihydroxyphenylacetaldehyde + H2O2 + NH4(+). It carries out the reaction tyramine + O2 + H2O = (4-hydroxyphenyl)acetaldehyde + H2O2 + NH4(+). The catalysed reaction is (R)-noradrenaline + O2 + H2O = (R)-3,4-dihydroxymandelaldehyde + H2O2 + NH4(+). It catalyses the reaction serotonin + O2 + H2O = (5-hydroxyindol-3-yl)acetaldehyde + H2O2 + NH4(+). The enzyme catalyses kynuramine + O2 + H2O = 3-(2-aminophenyl)-3-oxopropanal + H2O2 + NH4(+). It carries out the reaction tryptamine + O2 + H2O = indole-3-acetaldehyde + H2O2 + NH4(+). The catalysed reaction is 2-phenylethylamine + O2 + H2O = 2-phenylacetaldehyde + H2O2 + NH4(+). Its function is as follows. Catalyzes the oxidative deamination of primary and some secondary amine such as neurotransmitters, with concomitant reduction of oxygen to hydrogen peroxide and has important functions in the metabolism of neuroactive and vasoactive amines in the central nervous system and peripheral tissues. Preferentially oxidizes serotonin. Also catalyzes the oxidative deamination of kynuramine to 3-(2-aminophenyl)-3-oxopropanal that can spontaneously condense to 4-hydroxyquinoline. This chain is Amine oxidase [flavin-containing] A, found in Rattus norvegicus (Rat).